A 355-amino-acid polypeptide reads, in one-letter code: UDP-N-acetylglucosamine--N-acetylmuramyl-(pentapeptide) pyrophosphoryl-undecaprenol N-acetylglucosamine transferase (355 aa).

UDP-N-acetyl-alpha-D-glucosamine contacts are provided by residues 15–17 (TGG), Asn127, Arg163, Ser191, Ile244, 263–268 (ALTVSE), and Gln288.

The protein belongs to the glycosyltransferase 28 family. MurG subfamily.

It is found in the cell inner membrane. The enzyme catalyses di-trans,octa-cis-undecaprenyl diphospho-N-acetyl-alpha-D-muramoyl-L-alanyl-D-glutamyl-meso-2,6-diaminopimeloyl-D-alanyl-D-alanine + UDP-N-acetyl-alpha-D-glucosamine = di-trans,octa-cis-undecaprenyl diphospho-[N-acetyl-alpha-D-glucosaminyl-(1-&gt;4)]-N-acetyl-alpha-D-muramoyl-L-alanyl-D-glutamyl-meso-2,6-diaminopimeloyl-D-alanyl-D-alanine + UDP + H(+). It functions in the pathway cell wall biogenesis; peptidoglycan biosynthesis. Its function is as follows. Cell wall formation. Catalyzes the transfer of a GlcNAc subunit on undecaprenyl-pyrophosphoryl-MurNAc-pentapeptide (lipid intermediate I) to form undecaprenyl-pyrophosphoryl-MurNAc-(pentapeptide)GlcNAc (lipid intermediate II). The protein is UDP-N-acetylglucosamine--N-acetylmuramyl-(pentapeptide) pyrophosphoryl-undecaprenol N-acetylglucosamine transferase of Salmonella paratyphi A (strain ATCC 9150 / SARB42).